We begin with the raw amino-acid sequence, 311 residues long: Olfactory receptor 1N1 (311 aa).

Over 1-23 (MENQSSISEFFLRGISAPPEQQQ) the chain is Extracellular. Residue asparagine 3 is glycosylated (N-linked (GlcNAc...) asparagine). Residues 24 to 47 (SLFGIFLCMYLVTLTGNLLIILAI) form a helical membrane-spanning segment. Topologically, residues 48-55 (GSDLHLHT) are cytoplasmic. The helical transmembrane segment at 56–77 (PMYFFLANLSFVDMGLTSSTVT) threads the bilayer. The Extracellular portion of the chain corresponds to 78 to 98 (KMLVNIQTRHHTISYTGCLTQ). Residues cysteine 95 and cysteine 187 are joined by a disulfide bond. A helical membrane pass occupies residues 99-118 (MYFFLMFGDLDSFFLAAMAY). Topologically, residues 119-137 (DRYVAICHPLCYSTVMRPQ) are cytoplasmic. Residues 138–156 (VCALMLALCWVLTNIVALT) traverse the membrane as a helical segment. Over 157 to 194 (HTFLMARLSFCVTGEIAHFFCDITPVLKLSCSDTHINE) the chain is Extracellular. A helical transmembrane segment spans residues 195 to 217 (MMVFVLGGTVLIVPFLCIVTSYI). The Cytoplasmic portion of the chain corresponds to 218–234 (HIVPAILRVRTRGGVGK). The chain crosses the membrane as a helical span at residues 235–257 (AFSTCSSHLCVVCVFYGTLFSAY). The Extracellular segment spans residues 258-270 (LCPPSIASEEKDI). A helical transmembrane segment spans residues 271-290 (AAAAMYTIVTPMLNPFIYSL). The Cytoplasmic segment spans residues 291 to 311 (RNKDMKGALKRLFSHRSIVSS).

The protein belongs to the G-protein coupled receptor 1 family.

It is found in the cell membrane. Functionally, odorant receptor. The polypeptide is Olfactory receptor 1N1 (OR1N1) (Homo sapiens (Human)).